The sequence spans 229 residues: Adapter protein MecA (229 aa).

The protein belongs to the MecA family. In terms of assembly, homodimer.

In terms of biological role, enables the recognition and targeting of unfolded and aggregated proteins to the ClpC protease or to other proteins involved in proteolysis. This is Adapter protein MecA from Latilactobacillus sakei subsp. sakei (strain 23K) (Lactobacillus sakei subsp. sakei).